An 873-amino-acid polypeptide reads, in one-letter code: MAAAAAEFRGQARLPRFAAPRRYELRLRPDLAACVFSGEASVAVDVSAPTRFLVLNAADLAVDRASIRFQGLAPAEVSVFEEDEILVLEFAGELPLGEGVLAMRFNGTLNDQMRGFYRSKYEYKGETKNMAVTQFESVDARRCFPCWDEPSFKAKFKLTLEVPSELVALSNMPIVNEKIAGPIKTVEYEESPVMSTYLVAIVVGLFDYIEGVTSEGNKVRVYTQVGKSNQGKFALDVGVKSLNLYKEFFDTPYPLPKLDMVAIPDFTNGAMENYGLVTYREIYLLFDEQSSSASTKQNVAITVAHELAHQWFGNLVTMEWWTHLWLNEGFATWMSYLAVDSFFPEWNIWTQFLDSTTSALKLDSLAESHPIEVEIHHASEIDSIFDSISYDKGASVIRMLQSYLGAERFQKALASYIKKYAYSNAKTEDLWAVLEEVSGEPVKNLMTTWTKKQGYPVIGVKLKGHDVELEQDQFLLDGSSDSGMWIVPITLGCNSHDMQKRFLLKHKFSDIKGINSQYDDQDRQNSGNFWIKLNIDETGFYRVKYDDELTTALRNALQMKKLSLMDKIGIVEDAHALSIAGKQTLSSLLHLLYACRDEDDFSVLSHINSVTSSVAKISIDATPELAGEIKQLFIKLLLPTAEKLGWDPKNSESHLDAMLRPVLLVGLVQLGHDKTISEGVRRFQIFFDDRNTSLPPDTRKAAYLSVMHNVSSTNRSGYDALLKIYRESTEVEERLNVLGILSSCQDKDIVLESLNFIFTDEVRNQDAYLVLRSVIIDARETAWSWLKENWDRITKTFAASAILSDYVKSIVTLFTSKEKEAEISQFFATRTKPGFKRALKQSLENVRISARWVDGIRGEAELAQTVHDLLIKL.

The tract at residues 96 to 203 (LGEGVLAMRF…MSTYLVAIVV (108 aa)) is required for membrane association. Substrate is bound by residues Glu136 and 269–273 (GAMEN). His305 contacts Zn(2+). Glu306 serves as the catalytic Proton acceptor. The Zn(2+) site is built by His309 and Glu328. The Dileucine internalization motif signature appears at 721–722 (LL).

The protein belongs to the peptidase M1 family. As to quaternary structure, homodimer. The cofactor is Zn(2+).

It localises to the membrane. The protein localises to the microsome membrane. It is found in the cytoplasm. It catalyses the reaction Release of an N-terminal amino acid, Xaa-|-Yaa- from a peptide, amide or arylamide. Xaa is preferably Ala, but may be most amino acids including Pro (slow action). When a terminal hydrophobic residue is followed by a prolyl residue, the two may be released as an intact Xaa-Pro dipeptide.. This is Aminopeptidase M1-D from Oryza sativa subsp. japonica (Rice).